We begin with the raw amino-acid sequence, 598 residues long: IQ calmodulin-binding motif-containing protein 1 (598 aa).

Positions 1–157 (MKPTGTDPRI…SLFWLLGGHV (157 aa)) are interaction with BBS1, BBS8 and BBS9. Residues 287-598 (QEVEEQKLHQ…NLFIGGTKPP (312 aa)) are interaction with CEP290, BBS1, BBS2, BBS4, BBS5, BBS7, BBS8 and BBS9. 4 IQ domains span residues 294–317 (LHQAACLIQAYWKGFQTRKRLKKL), 318–338 (PSAVIALQRSFRSKRSKMLLE), 387–416 (EEKSALIIQKHWRGYRERKNFHQQRQSLIE), and 417–437 (YKAAVTLQRAALKFLAKCRKK). Positions 336 to 373 (LLEINRQKEEEDLKLQLQLQRQRAMRLSRELQLSMLEI) form a coiled coil. Positions 530–598 (AEGKEPELFL…NLFIGGTKPP (69 aa)) are interaction with BBS1, BBS2, BBS4, BBS7, BBS8 and BBS9. S572 carries the phosphoserine modification.

As to quaternary structure, interacts with CEP290/NPHP6; IQCB1/NPHP5 and CEP290 are proposed to form a functional NPHP5-6 module/NPHP6; localized to the centrosome. Interacts with calmodulin, ATXN10. Interacts with NPHP1, INVS, NPHP4 and RPGRIP1L; these interactions likely require additional interactors. Associates with the BBSome complex; interacts with BBS1, BBS2, BBS4, BBS5, BBS7, BBS8 and BBS9. As to expression, ubiquitously expressed in fetal and adult tissues. Localized to the outer segments and connecting cilia of photoreceptor cells. Up-regulated in a number of primary colorectal and gastric tumors.

It localises to the cytoplasm. It is found in the cytoskeleton. The protein resides in the microtubule organizing center. The protein localises to the centrosome. Its subcellular location is the centriole. In terms of biological role, involved in ciliogenesis. The function in an early step in cilia formation depends on its association with CEP290/NPHP6. Involved in regulation of the BBSome complex integrity, specifically for presence of BBS2 and BBS5 in the complex, and in ciliary targeting of selected BBSome cargos. May play a role in controlling entry of the BBSome complex to cilia possibly implicating CEP290/NPHP6. This Homo sapiens (Human) protein is IQ calmodulin-binding motif-containing protein 1 (IQCB1).